The primary structure comprises 470 residues: 3-isopropylmalate dehydratase large subunit (470 aa).

Cysteine 348, cysteine 409, and cysteine 412 together coordinate [4Fe-4S] cluster.

The protein belongs to the aconitase/IPM isomerase family. LeuC type 1 subfamily. Heterodimer of LeuC and LeuD. The cofactor is [4Fe-4S] cluster.

It catalyses the reaction (2R,3S)-3-isopropylmalate = (2S)-2-isopropylmalate. The protein operates within amino-acid biosynthesis; L-leucine biosynthesis; L-leucine from 3-methyl-2-oxobutanoate: step 2/4. Its function is as follows. Catalyzes the isomerization between 2-isopropylmalate and 3-isopropylmalate, via the formation of 2-isopropylmaleate. This chain is 3-isopropylmalate dehydratase large subunit, found in Thioalkalivibrio sulfidiphilus (strain HL-EbGR7).